The sequence spans 201 residues: UPF0301 protein BP0319 (201 aa).

The protein belongs to the UPF0301 (AlgH) family.

The chain is UPF0301 protein BP0319 from Bordetella pertussis (strain Tohama I / ATCC BAA-589 / NCTC 13251).